A 207-amino-acid chain; its full sequence is LysM and putative peptidoglycan-binding domain-containing protein 2 (207 aa).

In terms of domain architecture, LysM spans 61-105 (IEHRLSPSDTLQGIALKYGVTMEQIKRANKLFSTDCIFLRKSLNI). Residues 186–207 (AQRLKEEDLRHDDSYATCSYQH) are disordered. Basic and acidic residues predominate over residues 188–199 (RLKEEDLRHDDS).

This chain is LysM and putative peptidoglycan-binding domain-containing protein 2 (lysmd2), found in Xenopus tropicalis (Western clawed frog).